The chain runs to 1050 residues: Self-sufficient cytochrome P450 monooxygenase CYP505E5 (1050 aa).

Cys405 contacts heme. A disordered region spans residues 461–495; sequence TATGLSRRSMLVARDGSSEESSNHPAEARGDHAPA. In terms of domain architecture, Flavodoxin-like spans 500–641; it reads VSFFYGSNSG…DLEAWEETSL (142 aa). Residues 506 to 510 and 585 to 617 each bind FMN; these read SNSGT and VFGC…TRLA. Residues 679–907 form the FAD-binding FR-type domain; the sequence is KGLIEAKVTA…RPAKETFHLP (229 aa).

It in the N-terminal section; belongs to the cytochrome P450 family. FAD is required as a cofactor. Requires FMN as cofactor. Heme serves as cofactor.

It carries out the reaction 2 oxidized [cytochrome P450] + NADPH = 2 reduced [cytochrome P450] + NADP(+) + H(+). The enzyme catalyses an organic molecule + reduced [NADPH--hemoprotein reductase] + O2 = an alcohol + oxidized [NADPH--hemoprotein reductase] + H2O + H(+). It catalyses the reaction dodecanoate + reduced [NADPH--hemoprotein reductase] + O2 = 5-hydroxydodecanoate + oxidized [NADPH--hemoprotein reductase] + H2O + H(+). The catalysed reaction is tetradecanoate + reduced [NADPH--hemoprotein reductase] + O2 = 7-hydroxytetradecanoate + oxidized [NADPH--hemoprotein reductase] + H2O + H(+). It carries out the reaction dodecan-1-ol + reduced [NADPH--hemoprotein reductase] + O2 = 1,5-dodecanediol + oxidized [NADPH--hemoprotein reductase] + H2O + H(+). The enzyme catalyses dodecan-1-ol + reduced [NADPH--hemoprotein reductase] + O2 = 1,4-dodecanediol + oxidized [NADPH--hemoprotein reductase] + H2O + H(+). It catalyses the reaction dodecan-1-ol + reduced [NADPH--hemoprotein reductase] + O2 = 1,6-dodecanediol + oxidized [NADPH--hemoprotein reductase] + H2O + H(+). Self-sufficient cytochrome P450 monooxygenase that catalyzes the regioselective in-chain hydroxylation of alkanes, fatty alcohols, and fatty acids at the omega-7 position. Performs hydroxylation of C10-C16 n-alkanes and C12 and C14 fatty alcohols; and thereby enables the one step biocatalytic synthesis of rare alcohols such as 5-dodecanol and 7-tetradecanol. Converts 1-dodecanol into 1,5-dodecanediol as major product with very little sub-terminally hydroxylated products with the 1,4-dodecanediol and 1,6-dodecanediol more abundant. Converts dodecanoic acid to 5-hydroxydodecanoic acid which can be further converted into delta-dodecalactone by lactonization of the 5-hydroxy acid at low pH. Also gives sub-terminal hydroxylation of dodecanoic acid with 9-hydroxydodecanoic acid being the second most abundant product. This Aspergillus kawachii (strain NBRC 4308) (White koji mold) protein is Self-sufficient cytochrome P450 monooxygenase CYP505E5.